Here is a 71-residue protein sequence, read N- to C-terminus: DNA-directed RNA polymerase subunit Rpo10 (71 aa).

Zn(2+) is bound by residues C6, C9, C52, and C53.

This sequence belongs to the archaeal Rpo10/eukaryotic RPB10 RNA polymerase subunit family. Part of the RNA polymerase complex. Zn(2+) serves as cofactor.

It is found in the cytoplasm. The catalysed reaction is RNA(n) + a ribonucleoside 5'-triphosphate = RNA(n+1) + diphosphate. DNA-dependent RNA polymerase (RNAP) catalyzes the transcription of DNA into RNA using the four ribonucleoside triphosphates as substrates. The sequence is that of DNA-directed RNA polymerase subunit Rpo10 from Methanocella arvoryzae (strain DSM 22066 / NBRC 105507 / MRE50).